The chain runs to 193 residues: Probable nicotinate-nucleotide adenylyltransferase (193 aa).

It belongs to the NadD family.

The enzyme catalyses nicotinate beta-D-ribonucleotide + ATP + H(+) = deamido-NAD(+) + diphosphate. Its pathway is cofactor biosynthesis; NAD(+) biosynthesis; deamido-NAD(+) from nicotinate D-ribonucleotide: step 1/1. Functionally, catalyzes the reversible adenylation of nicotinate mononucleotide (NaMN) to nicotinic acid adenine dinucleotide (NaAD). The chain is Probable nicotinate-nucleotide adenylyltransferase from Fusobacterium nucleatum subsp. nucleatum (strain ATCC 25586 / DSM 15643 / BCRC 10681 / CIP 101130 / JCM 8532 / KCTC 2640 / LMG 13131 / VPI 4355).